Reading from the N-terminus, the 131-residue chain is uncharacterized protein (131 aa).

The disordered stretch occupies residues 60–100; that stretch reads GRHTLSQVPNKGHEKASAVQLPEKQGTDQSRRGPTSAVTKA. The segment covering 91–100 has biased composition (polar residues); it reads RGPTSAVTKA.

This is an uncharacterized protein from Homo sapiens (Human).